Consider the following 1040-residue polypeptide: Multidrug resistance protein MdtB (1040 aa).

The next 12 membrane-spanning stretches (helical) occupy residues 16 to 36 (FIMR…AGII), 342 to 362 (DTQF…YLFL), 369 to 389 (IIPG…MVFL), 396 to 416 (LTLM…IVVI), 440 to 460 (IGFT…PLLF), 472 to 492 (FAVT…TLTP), 537 to 557 (WLTL…WVFI), 863 to 883 (LGST…VLGV), 888 to 908 (FIHP…ALLA), 911 to 931 (LAGS…IGIV), 968 to 988 (ILMT…STGV), and 998 to 1018 (IGMV…TPVI).

Belongs to the resistance-nodulation-cell division (RND) (TC 2.A.6) family. MdtB subfamily. As to quaternary structure, part of a tripartite efflux system composed of MdtA, MdtB and MdtC. MdtB forms a heteromultimer with MdtC.

The protein resides in the cell inner membrane. The protein is Multidrug resistance protein MdtB of Klebsiella pneumoniae subsp. pneumoniae (strain ATCC 700721 / MGH 78578).